A 318-amino-acid chain; its full sequence is Polyprenal reductase (318 aa).

Topologically, residues 1-11 are cytoplasmic; it reads MAPWAEAEHSA. A helical transmembrane segment spans residues 12–34; it reads LNPLRAVWLTLTAAFLLTLLLQL. At 35-80 the chain is on the lumenal side; it reads LPPGLLPGCAIFQDLIRYGKTKCGEPSRPAACRAFDVPKRYFSHFY. Residues 81-101 traverse the membrane as a helical segment; the sequence is IISVLWNGFLLWCLTQSLFLG. Over 102-117 the chain is Cytoplasmic; that stretch reads APFPSWLHGLLRILGA. Residues 118 to 138 traverse the membrane as a helical segment; that stretch reads AQFQGGELALSAFLVLVFLWL. Topologically, residues 139-157 are lumenal; the sequence is HSLRRLFECLYVSVFSNVM. A helical membrane pass occupies residues 158–178; that stretch reads IHVVQYCFGLVYYVLVGLTVL. Over 179-194 the chain is Cytoplasmic; sequence SQVPMDGRNAYITGKN. The helical transmembrane segment at 195 to 215 threads the bilayer; sequence LLMQARWFHILGMMMFIWSSA. The Lumenal segment spans residues 216–260; it reads HQYKCHVILGNLRKNKAGVVIHCNHRIPFGDWFEYVSSPNYLAEL. The chain crosses the membrane as a helical span at residues 261 to 281; sequence MIYVSMAVTFGFHNLTWWLVV. Topologically, residues 282–318 are cytoplasmic; that stretch reads TNVFFNQALSAFLSHQFYKSKFVSYPKHRKAFLPFLF.

The protein belongs to the steroid 5-alpha reductase family. Polyprenal reductase subfamily. In terms of tissue distribution, expressed in preadipocytes (at protein level). Overexpressed in hormone-refractory prostate cancers (HRPC). Almost no or little expression in normal adult organs.

The protein resides in the endoplasmic reticulum membrane. It carries out the reaction a di-trans,poly-cis-dolichal + NADP(+) = a di-trans,poly-cis-polyprenal + NADPH + H(+). The catalysed reaction is a 3-oxo-5alpha-steroid + NADP(+) = a 3-oxo-Delta(4)-steroid + NADPH + H(+). The enzyme catalyses androst-4-ene-3,17-dione + NADPH + H(+) = 5alpha-androstan-3,17-dione + NADP(+). It catalyses the reaction 17beta-hydroxy-5alpha-androstan-3-one + NADP(+) = testosterone + NADPH + H(+). The protein operates within protein modification; protein glycosylation. Its function is as follows. Plays a key role in early steps of protein N-linked glycosylation by being involved in the conversion of polyprenol into dolichol. Acts as a polyprenal reductase that mediates the reduction of polyprenal into dolichal in a NADP-dependent mechanism. Dolichols are required for the synthesis of dolichol-linked monosaccharides and the oligosaccharide precursor used for N-glycosylation. Also able to convert testosterone (T) into 5-alpha-dihydrotestosterone (DHT). The chain is Polyprenal reductase from Homo sapiens (Human).